The following is a 377-amino-acid chain: Ipis-1 (377 aa).

2 N-linked (GlcNAc...) asparagine glycosylation sites follow: Asn11 and Asn226.

Belongs to the serpin family. In terms of tissue distribution, female salivary gland. Not detected in midgut and other tissues.

Its subcellular location is the secreted. Functionally, salivary protein with immunosuppressive properties that can modulate blood feeding of ticks on vertebrate species. Inhibits proliferation of bovine peripheral blood mononuclear cells (PBMCs). Inhibits IFN-gamma (IFNG) production by bovine PBMCs. This is Ipis-1 from Ixodes persulcatus (Taiga tick).